We begin with the raw amino-acid sequence, 176 residues long: ATP-dependent protease subunit HslV (176 aa).

The active site involves threonine 5. 3 residues coordinate Na(+): alanine 161, cysteine 164, and threonine 167.

It belongs to the peptidase T1B family. HslV subfamily. In terms of assembly, a double ring-shaped homohexamer of HslV is capped on each side by a ring-shaped HslU homohexamer. The assembly of the HslU/HslV complex is dependent on binding of ATP.

The protein localises to the cytoplasm. It carries out the reaction ATP-dependent cleavage of peptide bonds with broad specificity.. Its activity is regulated as follows. Allosterically activated by HslU binding. Its function is as follows. Protease subunit of a proteasome-like degradation complex believed to be a general protein degrading machinery. The sequence is that of ATP-dependent protease subunit HslV from Desulforamulus reducens (strain ATCC BAA-1160 / DSM 100696 / MI-1) (Desulfotomaculum reducens).